The chain runs to 394 residues: MAMAYLAWRLARRSCPSSLQVTSFPVVQLHMNRTAMRASQKDFENSMNQVKLLKKDPGNEVKLKLYALYKQATEGPCNMPKPGVFDLINKAKWDAWNALGSLPKEAARQNYVDLVSSLSPSLESSSQVEPGTDRKSTGFETLVVTSEDGITKIMFNRPKKKNAINTEMYHEIMRALKAASKDDSIITVLTGNGDYYSSGNDLTNFTDIPPGGVEEKAKNNAVLLREFVGCFIDFPKPLIAVVNGPAVGISVTLLGLFDAVYASDRATFHTPFSHLGQSPEGCSSYTFPKIMSPAKATEMLIFGKKLTAGEACAQGLVTEVFPDSTFQKEVWTRLKAFAKLPPNALRISKEVIRKREREKLHAVNAEECNVLQGRWLSDECTNAVVNFLSRKSKL.

A mitochondrion-targeting transit peptide spans 1 to 38 (MAMAYLAWRLARRSCPSSLQVTSFPVVQLHMNRTAMRA). Residues 39–124 (SQKDFENSMN…VSSLSPSLES (86 aa)) enclose the ACB domain. Lysine 51 bears the N6-acetyllysine; alternate mark. Lysine 51 carries the post-translational modification N6-succinyllysine; alternate. Lysine 55 carries the N6-succinyllysine modification. N6-acetyllysine; alternate is present on lysine 62. An N6-succinyllysine; alternate modification is found at lysine 62. Residue 66-70 (YALYK) coordinates an acyl-CoA. An N6-succinyllysine mark is found at lysine 70, lysine 81, and lysine 90. Position 92 is an N6-acetyllysine; alternate (lysine 92). An N6-succinyllysine; alternate modification is found at lysine 92. Lysine 92 is a binding site for an acyl-CoA. Serine 101 is subject to Phosphoserine. Tyrosine 111 serves as a coordination point for an acyl-CoA. The residue at position 119 (serine 119) is a Phosphoserine. The interval 151-322 (TKIMFNRPKK…AQGLVTEVFP (172 aa)) is ECH-like. The residue at position 161 (lysine 161) is an N6-succinyllysine. 198–202 (SGNDL) lines the substrate pocket. Residue lysine 289 is modified to N6-succinyllysine. The Microbody targeting signal motif lies at 392-394 (SKL).

The protein in the C-terminal section; belongs to the enoyl-CoA hydratase/isomerase family. In terms of tissue distribution, abundant in heart, skeletal muscle and liver. Expressed in CD34(+) T-cells and CD34(+) bone marrow cells.

Its subcellular location is the mitochondrion. The protein resides in the peroxisome matrix. The catalysed reaction is a (3Z)-enoyl-CoA = a 4-saturated (2E)-enoyl-CoA. It catalyses the reaction (3Z)-octenoyl-CoA = (2E)-octenoyl-CoA. The enzyme catalyses a (3E)-enoyl-CoA = a 4-saturated (2E)-enoyl-CoA. It carries out the reaction (2E)-tetradecenoyl-CoA = (3Z)-tetradecenoyl-CoA. The catalysed reaction is (3E)-tetradecenoyl-CoA = (2E)-tetradecenoyl-CoA. It catalyses the reaction (3E)-octenoyl-CoA = (2E)-octenoyl-CoA. The enzyme catalyses (3E)-nonenoyl-CoA = (2E)-nonenoyl-CoA. It functions in the pathway lipid metabolism; fatty acid beta-oxidation. In terms of biological role, able to isomerize both 3-cis and 3-trans double bonds into the 2-trans form in a range of enoyl-CoA species. Has a preference for 3-trans substrates. The sequence is that of Enoyl-CoA delta isomerase 2 (ECI2) from Homo sapiens (Human).